Reading from the N-terminus, the 198-residue chain is Glycerol-3-phosphate acyltransferase 3 (198 aa).

Transmembrane regions (helical) follow at residues 4–24, 71–91, 113–133, and 147–167; these read TYLLFIVAYLLGSIPFALVVG, LPMVFGLDIHPLWFGLAAVLG, LLCYSPVVFAILAVVFFTLLF, and VVAVIASIVTGDKIFIIAMCL.

This sequence belongs to the PlsY family. As to quaternary structure, probably interacts with PlsX.

Its subcellular location is the cell membrane. It catalyses the reaction an acyl phosphate + sn-glycerol 3-phosphate = a 1-acyl-sn-glycero-3-phosphate + phosphate. It participates in lipid metabolism; phospholipid metabolism. Functionally, catalyzes the transfer of an acyl group from acyl-phosphate (acyl-PO(4)) to glycerol-3-phosphate (G3P) to form lysophosphatidic acid (LPA). This enzyme utilizes acyl-phosphate as fatty acyl donor, but not acyl-CoA or acyl-ACP. This is Glycerol-3-phosphate acyltransferase 3 from Bacillus anthracis.